Reading from the N-terminus, the 574-residue chain is Fusion glycoprotein F0 (574 aa).

The N-terminal stretch at 1–25 is a signal peptide; it reads MELPILKANAITTILAAVTFCFASS. Over 26-524 the chain is Extracellular; sequence QNITEEFYQS…HVNAGKSTTN (499 aa). Asparagine 27 and asparagine 70 each carry an N-linked (GlcNAc...) asparagine; by host glycan. Disulfide bonds link cysteine 37-cysteine 439, cysteine 69-cysteine 212, cysteine 313-cysteine 343, cysteine 322-cysteine 333, cysteine 358-cysteine 367, cysteine 382-cysteine 393, and cysteine 416-cysteine 422. Positions 76–96 form a coiled coil; it reads VKLINQELDKYKNAVTELQLL. N-linked (GlcNAc...) asparagine; by host glycosylation is found at asparagine 116, asparagine 120, and asparagine 126. The fusion peptide stretch occupies residues 137-157; that stretch reads FLGFLLGVGSAIASGIAVSKV. A coiled-coil region spans residues 158–209; that stretch reads LHLEGEVNKIKSALLSTNKAVVSLSNGVSVLTSKVLDLKNYIDKQLLPIVNK. The stretch at 481-516 forms a coiled coil; sequence LVFPSDEFDASISQVNEKINQSLAFIRKSDELLHHV. An N-linked (GlcNAc...) asparagine; by host glycan is attached at asparagine 500. The helical transmembrane segment at 525–550 threads the bilayer; sequence IMITTIIIVIIVILLSLIAVGLLLYC. Cysteine 550 carries the S-palmitoyl cysteine; by host lipid modification. Over 551–574 the chain is Cytoplasmic; that stretch reads KARSTPVTLSKDQLSGINNIAFSN.

Belongs to the paramyxoviruses fusion glycoprotein family. As to quaternary structure, homotrimer. Heterodimer with fusion protein F2; disulfide-linked. Interacts with host NCL; this interaction plays a role in viral entry into the host cell. As a heterodimer with F2, interacts with host heparan sulfate. As a heterodimer with F2, interacts with host IGF1R; this interaction activates PRKCZ/PKCzeta that recruits NCL/nucleolin from the host nucleus to the plasma membrane. Part of a complex composed of F1, F2 and G glycoproteins. As a heterodimer with F2, interacts with host RHOA; this interaction facilitates virus-induced syncytium formation. In terms of assembly, homotrimer. Heterodimer with fusion protein F1; disulfide-linked. As a heterodimer with F1, interacts with host heparan sulfate. As a heterodimer with F1, interacts with host IGF1R; this interaction activates PRKCZ/PKCzeta that recruits NCL/nucleolin from the host nucleus to the plasma membrane. Part of a complex composed of F1, F2 and G glycoproteins. As a heterodimer with F1, interacts with host RHOA; this interaction facilitates virus-induced syncytium formation. In terms of processing, the F glycoprotein is synthesized as a F0 inactive precursor that is heavily N-glycosylated and processed at two sites by a host furin-like protease probably in the Golgi. The cleavage site between p27 and F1 may occur after endocytosis to yield the mature F1 and F2 proteins. Both cleavages are required for membrane fusion and p27 is released from the processed protein.

The protein resides in the host Golgi apparatus membrane. It is found in the virion membrane. The protein localises to the host cell membrane. In terms of biological role, inactive precursor that is cleaved at two sites by a furin-like protease to give rise to the mature F1 and F2 fusion glycoproteins. Functionally, class I viral fusion protein. Under the current model, the protein has at least 3 conformational states: pre-fusion native state, pre-hairpin intermediate state, and post-fusion hairpin state. During viral and plasma cell membrane fusion, the coiled coil regions assume a trimer-of-hairpins structure, positioning the fusion peptide in close proximity to the C-terminal region of the ectodomain. The formation of this structure appears to drive apposition and subsequent fusion of viral and cellular membranes leading to delivery of the nucleocapsid into the cytoplasm. This fusion is pH independent and occurs at the plasma or endosomal membrane. The trimer of F1-F2 (F protein) also facilitates the attachment to host cell by binding to host heparan sulfate. F protein is involved in the entry into the host cell through the interaction with host IGF1R. This interaction activates PRKCZ/PKCzeta that recruits host NCL/nucleolin to the apical cell surface where it can bind fusion glycoprotein F1. Later in infection, F protein expressed at the plasma membrane of infected cells can mediate fusion with adjacent cells to form syncytia, a cytopathic effect that could lead to tissue necrosis. F protein may trigger p53-dependent apoptosis. Major determinant of the species specificity of RSV infection. The trimer of F1-F2 (F protein) also facilitates the attachment to host cell by binding to host heparan sulfate. F protein is involved in the entry into the host cell through the interaction with host IGF1R. This interaction activates PRKCZ/PKCzeta that recruits host NCL/nucleolin to the apical cell surface where it can bind fusion glycoprotein F1. Later in infection, F protein expressed at the plasma membrane of infected cells can mediate fusion with adjacent cells to form syncytia, a cytopathic effect that could lead to tissue necrosis. F protein seems to trigger p53-dependent apoptosis. The chain is Fusion glycoprotein F0 (F) from Homo sapiens (Human).